The following is a 1052-amino-acid chain: Error-prone DNA polymerase (1052 aa).

It belongs to the DNA polymerase type-C family. DnaE2 subfamily.

It localises to the cytoplasm. The enzyme catalyses DNA(n) + a 2'-deoxyribonucleoside 5'-triphosphate = DNA(n+1) + diphosphate. In terms of biological role, DNA polymerase involved in damage-induced mutagenesis and translesion synthesis (TLS). It is not the major replicative DNA polymerase. The chain is Error-prone DNA polymerase from Bordetella parapertussis (strain 12822 / ATCC BAA-587 / NCTC 13253).